A 777-amino-acid polypeptide reads, in one-letter code: Glucocorticoid receptor (777 aa).

A compositionally biased stretch (basic and acidic residues) spans 1-14; it reads MDSKESLTPGKEEN. Residues 1 to 23 form a disordered region; that stretch reads MDSKESLTPGKEENPSSVLTQER. The segment at 1–420 is modulating; sequence MDSKESLTPG…TATTGPPPKL (420 aa). Thr8 carries the phosphothreonine modification. Position 23 is an omega-N-methylarginine (Arg23). Phosphoserine is present on residues Ser45, Ser113, Ser134, and Ser141. Positions 130–182 are disordered; that stretch reads NRSTSVPENPKSSASSSVSAAPKEKEFPKTHSDVSSEQQNLKGQTGTNGGNVK. Low complexity predominate over residues 134–150; that stretch reads SVPENPKSSASSSVSAA. Residues 151-163 are compositionally biased toward basic and acidic residues; that stretch reads PKEKEFPKTHSDV. Positions 164-174 are enriched in polar residues; sequence SSEQQNLKGQT. 3 positions are modified to phosphoserine: Ser203, Ser211, and Ser226. Residue Lys258 forms a Glycyl lysine isopeptide (Lys-Gly) (interchain with G-Cter in SUMO2) linkage. The residue at position 267 (Ser267) is a Phosphoserine. Glycyl lysine isopeptide (Lys-Gly) (interchain with G-Cter in SUMO); alternate cross-links involve residues Lys277 and Lys293. Residues Lys277 and Lys293 each participate in a glycyl lysine isopeptide (Lys-Gly) (interchain with G-Cter in SUMO2); alternate cross-link. A compositionally biased stretch (low complexity) spans 394-414; sequence SSPSMRPDVSSPPSSSSTATT. The disordered stretch occupies residues 394-415; sequence SSPSMRPDVSSPPSSSSTATTG. Residue Ser404 is modified to Phosphoserine. A Glycyl lysine isopeptide (Lys-Gly) (interchain with G-Cter in ubiquitin) cross-link involves residue Lys419. 2 NR C4-type zinc fingers span residues 421 to 441 and 457 to 481; these read CLVCSDEASGCHYGVLTCGSC and CAGRNDCIIDKIRRKNCPACRYRKC. Positions 421–486 form a DNA-binding region, nuclear receptor; sequence CLVCSDEASG…RYRKCLQAGM (66 aa). Residues Lys480, Lys492, Lys494, and Lys495 each carry the N6-acetyllysine modification. The segment at 485 to 777 is interaction with CLOCK; sequence GMNLEARKTK…NIKKLLFHQK (293 aa). The hinge stretch occupies residues 487 to 523; that stretch reads NLEARKTKKKIKGIQQATTGVSQETSENPANKTIVPA. Residues 524-758 form the NR LBD domain; it reads TLPQLTPTLV…FPEMLAEIIT (235 aa). The interval 532 to 697 is interaction with CRY1; the sequence is LVSLLEVIEP…EIRMTYIKEL (166 aa). Lys703 participates in a covalent cross-link: Glycyl lysine isopeptide (Lys-Gly) (interchain with G-Cter in SUMO).

This sequence belongs to the nuclear hormone receptor family. NR3 subfamily. In terms of assembly, heteromultimeric cytoplasmic complex with HSP90AA1, HSPA1A/HSPA1B, and FKBP5 or another immunophilin such as PPID, STIP1, or the immunophilin homolog PPP5C. Upon ligand binding FKBP5 dissociates from the complex and FKBP4 takes its place, thereby linking the complex to dynein and mediating transport to the nucleus, where the complex dissociates. Probably forms a complex composed of chaperones HSP90 and HSP70, co-chaperones CDC37, PPP5C, TSC1 and client protein TSC2, CDK4, AKT, RAF1 and NR3C1; this complex does not contain co-chaperones STIP1/HOP and PTGES3/p23. Directly interacts with UNC45A. Binds to DNA as a homodimer, and as heterodimer with NR3C2 or the retinoid X receptor. Binds STAT5A and STAT5B homodimers and heterodimers. Interacts with NRIP1, POU2F1, POU2F2 and TRIM28. Interacts with several coactivator complexes, including the SMARCA4 complex, CREBBP/EP300, TADA2L (Ada complex) and p160 coactivators such as NCOA2 and NCOA6. Interaction with BAG1 inhibits transactivation. Interacts with HEXIM1 and TGFB1I1. Interacts with NCOA1. Interacts with NCOA3, SMARCA4, SMARCC1, SMARCD1, and SMARCE1. Interacts with CLOCK, CRY1 and CRY2 in a ligand-dependent fashion. Interacts with CIART. Interacts with RWDD3. Interacts with UBE2I/UBC9 and this interaction is enhanced in the presence of RWDD3. Interacts with GRIP1. Interacts with NR4A3 (via nuclear receptor DNA-binding domain), represses transcription activity of NR4A3 on the POMC promoter Nur response element (NurRE). Directly interacts with PNRC2 to attract and form a complex with UPF1 and DCP1A; the interaction leads to rapid mRNA degradation. Interacts with GSK3B. Interacts with FNIP1 and FNIP2. Interacts (via C-terminus) with HNRNPU (via C-terminus). Interacts with MCM3AP. Interacts (via domain NR LBD) with HSP90AA1 and HSP90AB1. In the absence of hormonal ligand, interacts with TACC1. Interacts (via NR LBD domain) with ZNF764 (via KRAB domain); the interaction regulates transcription factor activity of NR3C1 by directing its actions toward certain biologic pathways. Post-translationally, acetylation by CLOCK reduces its binding to glucocorticoid response elements and its transcriptional activity. Increased proteasome-mediated degradation in response to glucocorticoids. In terms of processing, phosphorylated in the absence of hormone; becomes hyperphosphorylated in the presence of glucocorticoid. The Ser-203, Ser-226 and Ser-404-phosphorylated forms are mainly cytoplasmic, and the Ser-211-phosphorylated form is nuclear. Phosphorylation at Ser-211 increases transcriptional activity. Phosphorylation at Ser-203, Ser-226 and Ser-404 decreases signaling capacity. Phosphorylation at Ser-404 may protect from glucocorticoid-induced apoptosis. Phosphorylation at Ser-203 and Ser-211 is not required in regulation of chromosome segregation. May be dephosphorylated by PPP5C, attenuates NR3C1 action. Post-translationally, ubiquitinated by UBR5, leading to its degradation: UBR5 specifically recognizes and binds ligand-bound NR3C1 when it is not associated with coactivators (NCOAs). In presence of NCOAs, the UBR5-degron is not accessible, preventing its ubiquitination and degradation. Sumoylation at Lys-277 and Lys-293 negatively regulates its transcriptional activity. Sumoylation at Lys-703 positively regulates its transcriptional activity in the presence of RWDD3. Sumoylation at Lys-277 and Lys-293 is dispensable whereas sumoylation at Lys-703 is critical for the stimulatory effect of RWDD3 on its transcriptional activity. Heat shock increases sumoylation in a RWWD3-dependent manner.

The protein localises to the cytoplasm. It localises to the nucleus. The protein resides in the mitochondrion. It is found in the cytoskeleton. Its subcellular location is the spindle. The protein localises to the microtubule organizing center. It localises to the centrosome. The protein resides in the chromosome. It is found in the nucleoplasm. In terms of biological role, receptor for glucocorticoids (GC). Has a dual mode of action: as a transcription factor that binds to glucocorticoid response elements (GRE), both for nuclear and mitochondrial DNA, and as a modulator of other transcription factors. Affects inflammatory responses, cellular proliferation and differentiation in target tissues. Involved in chromatin remodeling. Plays a role in rapid mRNA degradation by binding to the 5' UTR of target mRNAs and interacting with PNRC2 in a ligand-dependent manner which recruits the RNA helicase UPF1 and the mRNA-decapping enzyme DCP1A, leading to RNA decay. Could act as a coactivator for STAT5-dependent transcription upon growth hormone (GH) stimulation and could reveal an essential role of hepatic GR in the control of body growth. Mediates glucocorticoid-induced apoptosis. Promotes accurate chromosome segregation during mitosis. May act as a tumor suppressor. May play a negative role in adipogenesis through the regulation of lipolytic and antilipogenic gene expression. This is Glucocorticoid receptor (NR3C1) from Aotus nancymaae (Ma's night monkey).